Consider the following 412-residue polypeptide: Multifunctional CCA protein (412 aa).

ATP-binding residues include glycine 8 and arginine 11. Residues glycine 8 and arginine 11 each contribute to the CTP site. 2 residues coordinate Mg(2+): glutamate 21 and aspartate 23. ATP contacts are provided by arginine 91, arginine 137, and arginine 140. The CTP site is built by arginine 91, arginine 137, and arginine 140. Positions 228-329 constitute an HD domain; sequence CGIHTLMSLQ…WRLLQRLDVL (102 aa).

Belongs to the tRNA nucleotidyltransferase/poly(A) polymerase family. Bacterial CCA-adding enzyme type 1 subfamily. Monomer. Can also form homodimers and oligomers. Requires Mg(2+) as cofactor. Ni(2+) is required as a cofactor.

It carries out the reaction a tRNA precursor + 2 CTP + ATP = a tRNA with a 3' CCA end + 3 diphosphate. It catalyses the reaction a tRNA with a 3' CCA end + 2 CTP + ATP = a tRNA with a 3' CCACCA end + 3 diphosphate. Its function is as follows. Catalyzes the addition and repair of the essential 3'-terminal CCA sequence in tRNAs without using a nucleic acid template. Adds these three nucleotides in the order of C, C, and A to the tRNA nucleotide-73, using CTP and ATP as substrates and producing inorganic pyrophosphate. tRNA 3'-terminal CCA addition is required both for tRNA processing and repair. Also involved in tRNA surveillance by mediating tandem CCA addition to generate a CCACCA at the 3' terminus of unstable tRNAs. While stable tRNAs receive only 3'-terminal CCA, unstable tRNAs are marked with CCACCA and rapidly degraded. The polypeptide is Multifunctional CCA protein (Acinetobacter baumannii (strain ATCC 17978 / DSM 105126 / CIP 53.77 / LMG 1025 / NCDC KC755 / 5377)).